Reading from the N-terminus, the 259-residue chain is Thiazole synthase (259 aa).

K95 serves as the catalytic Schiff-base intermediate with DXP. 1-deoxy-D-xylulose 5-phosphate-binding positions include G156, A182 to G183, and N204 to T205.

This sequence belongs to the ThiG family. Homotetramer. Forms heterodimers with either ThiH or ThiS.

The protein localises to the cytoplasm. The enzyme catalyses [ThiS sulfur-carrier protein]-C-terminal-Gly-aminoethanethioate + 2-iminoacetate + 1-deoxy-D-xylulose 5-phosphate = [ThiS sulfur-carrier protein]-C-terminal Gly-Gly + 2-[(2R,5Z)-2-carboxy-4-methylthiazol-5(2H)-ylidene]ethyl phosphate + 2 H2O + H(+). It participates in cofactor biosynthesis; thiamine diphosphate biosynthesis. Its function is as follows. Catalyzes the rearrangement of 1-deoxy-D-xylulose 5-phosphate (DXP) to produce the thiazole phosphate moiety of thiamine. Sulfur is provided by the thiocarboxylate moiety of the carrier protein ThiS. In vitro, sulfur can be provided by H(2)S. The chain is Thiazole synthase from Baumannia cicadellinicola subsp. Homalodisca coagulata.